The sequence spans 198 residues: Transmembrane protein 9B (198 aa).

The first 33 residues, 1 to 33 (MATLWGGLLRLGSLLSLSCLALSVLLLAQLSDA), serve as a signal peptide directing secretion. Asparagine 60 carries an N-linked (GlcNAc...) asparagine glycan. A helical transmembrane segment spans residues 105 to 125 (IIIYLSILGLLLLYMVYLTLV). 2 positions are modified to phosphoserine: serine 142 and serine 189.

Belongs to the TMEM9 family. Post-translationally, N-glycosylated.

The protein localises to the lysosome membrane. It localises to the early endosome membrane. In terms of biological role, enhances production of pro-inflammatory cytokines induced by TNF, IL1B, and TLR ligands. Has a role in TNF activation of both the NF-kappaB and MAPK pathways. This Homo sapiens (Human) protein is Transmembrane protein 9B (TMEM9B).